A 123-amino-acid polypeptide reads, in one-letter code: Small ribosomal subunit protein uS12 (123 aa).

D89 carries the post-translational modification 3-methylthioaspartic acid.

It belongs to the universal ribosomal protein uS12 family. Part of the 30S ribosomal subunit. Contacts proteins S8 and S17. May interact with IF1 in the 30S initiation complex.

Its function is as follows. With S4 and S5 plays an important role in translational accuracy. In terms of biological role, interacts with and stabilizes bases of the 16S rRNA that are involved in tRNA selection in the A site and with the mRNA backbone. Located at the interface of the 30S and 50S subunits, it traverses the body of the 30S subunit contacting proteins on the other side and probably holding the rRNA structure together. The combined cluster of proteins S8, S12 and S17 appears to hold together the shoulder and platform of the 30S subunit. The chain is Small ribosomal subunit protein uS12 from Orientia tsutsugamushi (strain Boryong) (Rickettsia tsutsugamushi).